The following is a 306-amino-acid chain: MGKLVIGSRGSELALWQANYIKERLKKECFIESEIQIVKTTGDKILDAPLNKIGGKGLFTKELEELLLKGTIDLAVHSLKDVPVVFEKGLDLACITKRADVRDTFLSTKFPDLMSLPKGAKVGTTSLRRSMQLKCKRKDLDTESLRGNVQTRLKKLESGEFDAIILAEAGLCRLNIQGAKYRKAFSVEEMIPSMGQGALGVEMLKSHKHFTALQKLNDEESAFCCHLEREFIKGLNGGCQIPVGVHASLMGEKVKIQAILGLPNGEEVIAKEKQGDKNKAFDSVQELLEAFLQSGAREILEKVQLF.

The residue at position 239 (C239) is an S-(dipyrrolylmethanemethyl)cysteine.

The protein belongs to the HMBS family. Monomer. Requires dipyrromethane as cofactor.

The catalysed reaction is 4 porphobilinogen + H2O = hydroxymethylbilane + 4 NH4(+). Its pathway is porphyrin-containing compound metabolism; protoporphyrin-IX biosynthesis; coproporphyrinogen-III from 5-aminolevulinate: step 2/4. Its function is as follows. Tetrapolymerization of the monopyrrole PBG into the hydroxymethylbilane pre-uroporphyrinogen in several discrete steps. This Helicobacter acinonychis (strain Sheeba) protein is Porphobilinogen deaminase.